The chain runs to 308 residues: 4-hydroxyproline 2-epimerase (308 aa).

Cys88 serves as the catalytic Proton acceptor. Substrate contacts are provided by residues 89–90 (GH), His208, and Asp232. The Proton donor role is filled by Cys236. A substrate-binding site is contributed by 237 to 238 (GT).

The protein belongs to the proline racemase family.

It carries out the reaction trans-4-hydroxy-L-proline = cis-4-hydroxy-D-proline. Catalyzes the reversible epimerization of cis-4-hydroxy-D-proline (c4DHyp) to trans-4-hydroxy-L-proline (t4LHyp). May be involved in a degradation pathway that allows P.putida strain KT2440 to grow on either epimer of 4-hydroxyproline, c4DHyp and t4LHyp, as the sole carbon and nitrogen source. Does not exhibit measureable racemase activity in vitro with any of the 19 natural chiral amino acid enantiomers. This chain is 4-hydroxyproline 2-epimerase, found in Pseudomonas putida (strain ATCC 47054 / DSM 6125 / CFBP 8728 / NCIMB 11950 / KT2440).